The following is a 1474-amino-acid chain: MGKNKLLHPSLVLLLLVLLPTDASVSGKPQYMVLVPSLLHTETTEKGCVLLSYLNETVTVSASLESVRGNRSLFTDLEAENDVLHCVAFAVPKSSSNEEVMFLTVQVKGPTQEFKKRTTVMVKNEDSLVFVQTDKSIYKPGQTVKFRVVSMDENFHPLNELIPLVYIQDPKGNRIAQWQSFQLEGGLKQFSFPLSSEPFQGSYKVVVQKKSGGRTEHPFTVEEFVLPKFEVQVTVPKIITILEEEMNVSVCGLYTYGKPVPGHVTVSICRKYSDASDCHGEDSQAFCEKFSGQLNSHGCFYQQVKTKVFQLKRKEYEMKLHTEAQIQEEGTVVELTGRQSSEITRTITKLSFVKVDSHFRQGIPFFGQVRLVDGKGVPIPNKVIFIRGNEANYYSNATTDEHGLVQFSINTTNVMGTSLTVRVNYKDRSPCYGYQWVSEEHEEAHHTAYLVFSPSKSFVHLEPMSHELPCGHTQTVQAHYILNGGTLLGLKKLSFYYLIMAKGGIVRTGTHGLLVKQEDMKGHFSISIPVKSDIAPVARLLIYAVLPTGDVIGDSAKYDVENCLANKVDLSFSPSQSLPASHAHLRVTAAPQSVCALRAVDQSVLLMKPDAELSASSVYNLLPEKDLTGFPGPLNDQDNEDCINRHNVYINGITYTPVSSTNEKDMYSFLEDMGLKAFTNSKIRKPKMCPQLQQYEMHGPEGLRVGFYESDVMGRGHARLVHVEEPHTETVRKYFPETWIWDLVVVNSAGVAEVGVTVPDTITEWKAGAFCLSEDAGLGISSTASLRAFQPFFVELTMPYSVIRGEAFTLKATVLNYLPKCIRVSVQLEASPAFLAVPVEKEQAPHCICANGRQTVSWAVTPKSLGNVNFTVSAEALESQELCGTEVPSVPEHGRKDTVIKPLLVEPEGLEKETTFNSLLCPSGGEVSEELSLKLPPNVVEESARASVSVLGDILGSAMQNTQNLLQMPYGCGEQNMVLFAPNIYVLDYLNETQQLTPEIKSKAIGYLNTGYQRQLNYKHYDGSYSTFGERYGRNQGNTWLTAFVLKTFAQARAYIFIDEAHITQALIWLSQRQKDNGCFRSSGSLLNNAIKGGVEDEVTLSAYITIALLEIPLTVTHPVVRNALFCLESAWKTAQEGDHGSHVYTKALLAYAFALAGNQDKRKEVLKSLNEEAVKKDNSVHWERPQKPKAPVGHFYEPQAPSAEVEMTSYVLLAYLTAQPAPTSEDLTSATNIVKWITKQQNAQGGFSSTQDTVVALHALSKYGAATFTRTGKAAQVTIQSSGTFSSKFQVDNNNRLLLQQVSLPELPGEYSMKVTGEGCVYLQTSLKYNILPEKEEFPFALGVQTLPQTCDEPKAHTSFQISLSVSYTGSRSASNMAIVDVKMVSGFIPLKPTVKMLERSNHVSRTEVSSNHVLIYLDKVSNQTLSLFFTVLQDVPVRDLKPAIVKVYDYYETDEFAIAEYNAPCSKDLGNA.

An N-terminal signal peptide occupies residues 1–23 (MGKNKLLHPSLVLLLLVLLPTDA). Cysteine 48 and cysteine 86 are oxidised to a cystine. N-linked (GlcNAc...) (complex) asparagine glycosylation occurs at asparagine 55. N-linked (GlcNAc...) asparagine glycans are attached at residues asparagine 70 and asparagine 247. 2 disulfides stabilise this stretch: cysteine 251–cysteine 299 and cysteine 269–cysteine 287. Asparagine 396 and asparagine 410 each carry an N-linked (GlcNAc...) asparagine glycan. Disulfide bonds link cysteine 470-cysteine 563, cysteine 595-cysteine 771, cysteine 642-cysteine 689, cysteine 821-cysteine 849, cysteine 847-cysteine 883, cysteine 921-cysteine 1321, cysteine 1079-cysteine 1127, and cysteine 1352-cysteine 1467. Residues 690 to 728 (PQLQQYEMHGPEGLRVGFYESDVMGRGHARLVHVEEPHT) are bait region. Isoglutamyl lysine isopeptide (Gln-Lys) (interchain with K-? in other proteins) cross-links involve residues glutamine 693 and glutamine 694. Inhibitory regions lie at residues 704-709 (RVGFYE), 719-723 (RLVHV), and 730-735 (TVRKYF). Asparagine 869 carries N-linked (GlcNAc...) asparagine glycosylation. A cross-link (isoglutamyl cysteine thioester (Cys-Gln)) is located at residues 972–975 (CGEQ). N-linked (GlcNAc...) asparagine glycosylation occurs at asparagine 991. Asparagine 1424 carries N-linked (GlcNAc...) (complex) asparagine glycosylation.

This sequence belongs to the protease inhibitor I39 (alpha-2-macroglobulin) family. Homotetramer; disulfide-linked. In terms of tissue distribution, secreted in plasma.

It is found in the secreted. Functionally, is able to inhibit all four classes of proteinases by a unique 'trapping' mechanism. This protein has a peptide stretch, called the 'bait region' which contains specific cleavage sites for different proteinases. When a proteinase cleaves the bait region, a conformational change is induced in the protein which traps the proteinase. The entrapped enzyme remains active against low molecular weight substrates (activity against high molecular weight substrates is greatly reduced). Following cleavage in the bait region, a thioester bond is hydrolyzed and mediates the covalent binding of the protein to the proteinase. The protein is Alpha-2-macroglobulin (A2M) of Homo sapiens (Human).